Reading from the N-terminus, the 542-residue chain is CTP synthase (542 aa).

The interval 1–265 (MTRYIFVTGG…DEIIVERFGL (265 aa)) is amidoligase domain. Residue Ser13 coordinates CTP. UTP is bound at residue Ser13. ATP-binding positions include 14-19 (SLGKGI) and Asp71. Mg(2+) is bound by residues Asp71 and Glu139. CTP contacts are provided by residues 146 to 148 (DIE), 186 to 191 (KTKPTQ), and Lys222. UTP-binding positions include 186–191 (KTKPTQ) and Lys222. Positions 290-541 (TIAMVGKYME…VRAALENAGG (252 aa)) constitute a Glutamine amidotransferase type-1 domain. L-glutamine is bound at residue Gly351. The active-site Nucleophile; for glutamine hydrolysis is the Cys378. L-glutamine contacts are provided by residues 379–382 (LGLQ), Glu402, and Arg469. Active-site residues include His514 and Glu516.

It belongs to the CTP synthase family. Homotetramer.

The catalysed reaction is UTP + L-glutamine + ATP + H2O = CTP + L-glutamate + ADP + phosphate + 2 H(+). It carries out the reaction L-glutamine + H2O = L-glutamate + NH4(+). It catalyses the reaction UTP + NH4(+) + ATP = CTP + ADP + phosphate + 2 H(+). Its pathway is pyrimidine metabolism; CTP biosynthesis via de novo pathway; CTP from UDP: step 2/2. Its activity is regulated as follows. Allosterically activated by GTP, when glutamine is the substrate; GTP has no effect on the reaction when ammonia is the substrate. The allosteric effector GTP functions by stabilizing the protein conformation that binds the tetrahedral intermediate(s) formed during glutamine hydrolysis. Inhibited by the product CTP, via allosteric rather than competitive inhibition. Catalyzes the ATP-dependent amination of UTP to CTP with either L-glutamine or ammonia as the source of nitrogen. Regulates intracellular CTP levels through interactions with the four ribonucleotide triphosphates. This is CTP synthase from Hahella chejuensis (strain KCTC 2396).